Reading from the N-terminus, the 237-residue chain is Phosphoadenosine 5'-phosphosulfate reductase (237 aa).

The Nucleophile; cysteine thiosulfonate intermediate role is filled by cysteine 231.

This sequence belongs to the PAPS reductase family. CysH subfamily.

The protein localises to the cytoplasm. The enzyme catalyses [thioredoxin]-disulfide + sulfite + adenosine 3',5'-bisphosphate + 2 H(+) = [thioredoxin]-dithiol + 3'-phosphoadenylyl sulfate. It functions in the pathway sulfur metabolism; hydrogen sulfide biosynthesis; sulfite from sulfate: step 3/3. Its function is as follows. Catalyzes the formation of sulfite from phosphoadenosine 5'-phosphosulfate (PAPS) using thioredoxin as an electron donor. The polypeptide is Phosphoadenosine 5'-phosphosulfate reductase (Xylella fastidiosa (strain 9a5c)).